We begin with the raw amino-acid sequence, 258 residues long: Transmembrane O-methyltransferase homolog (258 aa).

S-adenosyl-L-methionine is bound by residues glutamate 104, 106–107 (GT), serine 112, glutamate 130, and serine 160.

This sequence belongs to the class I-like SAM-binding methyltransferase superfamily. Cation-dependent O-methyltransferase family. In terms of assembly, interacts with LHFPL5, PCDH15, TMC1, TMC2 and TMIE. The interaction of TOMT with TMC1 and TMC2 is required for the transportation of TMC1/2 into the stereocilia of hair cells. Interacts directly with TMC1. As to expression, widely expressed with high levels in outer and inner hair cells of the cochlea and vestibule.

Its subcellular location is the cytoplasm. It is found in the endoplasmic reticulum. It catalyses the reaction a catechol + S-adenosyl-L-methionine = a guaiacol + S-adenosyl-L-homocysteine + H(+). Its function is as follows. Catalyzes the O-methylation, and thereby the inactivation, of catecholamine neurotransmitters and catechol hormones. Required for auditory function. Component of the cochlear hair cell's mechanotransduction (MET) machinery. Involved in the assembly of the asymmetric tip-link MET complex. Required for transportation of TMC1 and TMC2 proteins into the mechanically sensitive stereocilia of the hair cells. The function in MET is independent of the enzymatic activity. This Mus musculus (Mouse) protein is Transmembrane O-methyltransferase homolog.